A 355-amino-acid chain; its full sequence is UDP-N-acetylglucosamine--N-acetylmuramyl-(pentapeptide) pyrophosphoryl-undecaprenol N-acetylglucosamine transferase (355 aa).

Residues 14 to 16 (TGG), Asn126, Arg162, Ser190, Ile243, 262 to 267 (ALTVSE), and Gln287 contribute to the UDP-N-acetyl-alpha-D-glucosamine site.

The protein belongs to the glycosyltransferase 28 family. MurG subfamily.

It is found in the cell inner membrane. It catalyses the reaction di-trans,octa-cis-undecaprenyl diphospho-N-acetyl-alpha-D-muramoyl-L-alanyl-D-glutamyl-meso-2,6-diaminopimeloyl-D-alanyl-D-alanine + UDP-N-acetyl-alpha-D-glucosamine = di-trans,octa-cis-undecaprenyl diphospho-[N-acetyl-alpha-D-glucosaminyl-(1-&gt;4)]-N-acetyl-alpha-D-muramoyl-L-alanyl-D-glutamyl-meso-2,6-diaminopimeloyl-D-alanyl-D-alanine + UDP + H(+). It functions in the pathway cell wall biogenesis; peptidoglycan biosynthesis. In terms of biological role, cell wall formation. Catalyzes the transfer of a GlcNAc subunit on undecaprenyl-pyrophosphoryl-MurNAc-pentapeptide (lipid intermediate I) to form undecaprenyl-pyrophosphoryl-MurNAc-(pentapeptide)GlcNAc (lipid intermediate II). This is UDP-N-acetylglucosamine--N-acetylmuramyl-(pentapeptide) pyrophosphoryl-undecaprenol N-acetylglucosamine transferase from Vibrio parahaemolyticus serotype O3:K6 (strain RIMD 2210633).